Here is a 286-residue protein sequence, read N- to C-terminus: Aspartate/glutamate leucyltransferase (286 aa).

Belongs to the R-transferase family. Bpt subfamily.

The protein localises to the cytoplasm. It carries out the reaction N-terminal L-glutamyl-[protein] + L-leucyl-tRNA(Leu) = N-terminal L-leucyl-L-glutamyl-[protein] + tRNA(Leu) + H(+). It catalyses the reaction N-terminal L-aspartyl-[protein] + L-leucyl-tRNA(Leu) = N-terminal L-leucyl-L-aspartyl-[protein] + tRNA(Leu) + H(+). In terms of biological role, functions in the N-end rule pathway of protein degradation where it conjugates Leu from its aminoacyl-tRNA to the N-termini of proteins containing an N-terminal aspartate or glutamate. In Jannaschia sp. (strain CCS1), this protein is Aspartate/glutamate leucyltransferase.